The following is a 131-amino-acid chain: MSLNQKALNSYVYTLAFSSLSFGLIFGLYLFVYSGFMAIALVTIAIIAFYALITYLVFAAPLQVWLRRRRRKFSLINFLIYIAVAFSAVFLFWFVDYPPNALTMFRSFEYYIMSIVAAFIYWFWDSIFLRN.

Transmembrane regions (helical) follow at residues 12–32 (VYTL…YLFV), 38–58 (AIAL…YLVF), 75–95 (LINF…FWFV), and 108–128 (FEYY…DSIF).

It belongs to the UPF0715 family.

It is found in the cell membrane. This Bacillus subtilis (strain 168) protein is SPbeta prophage-derived UPF0715 membrane protein YopD (yopD).